The primary structure comprises 60 residues: MAKLQITLTRSVIGRPETQRKTVEALGLKKTNSSVVVEDNPAIRGQINKVKHLLTIEEEK.

The protein belongs to the universal ribosomal protein uL30 family. As to quaternary structure, part of the 50S ribosomal subunit.

This chain is Large ribosomal subunit protein uL30, found in Staphylococcus epidermidis (strain ATCC 35984 / DSM 28319 / BCRC 17069 / CCUG 31568 / BM 3577 / RP62A).